Consider the following 221-residue polypeptide: DELTA-actitoxin-Ucs1a (221 aa).

The first 19 residues, 1-19 (MNRLIVLCLFVAMIYATIA), serve as a signal peptide directing secretion. Positions 20–42 (LPKKEDISNDERSISVSKVPVKK) are excised as a propeptide. Residues 45 to 54 (AIAGAVIEGA) are plays an important role in the hemolytic activity. The interval 53-72 (GAKLTFGILEKILTVLGDIN) is N-terminal region. The phosphocholine site is built by serine 96, valine 129, serine 147, proline 149, tyrosine 175, tyrosine 179, and tyrosine 180. A trp-rich region, which is important for the binding to lipid membrane region spans residues 147–162 (SVPYDYNLYSNWWNIK). The Cell attachment site, crucial for protein stability motif lies at 186–188 (KGD).

This sequence belongs to the actinoporin family. Sea anemone subfamily. In terms of assembly, octamer or nonamer in membranes. Monomer in the soluble state.

The protein localises to the secreted. Its subcellular location is the nematocyst. It is found in the target cell membrane. Its function is as follows. Pore-forming protein that forms cations-selective hydrophilic pores of around 1 nm and causes cytolysis. Pore formation is a multi-step process that involves specific recognition of membrane sphingomyelin (but neither cholesterol nor phosphatidylcholine) using aromatic rich region and adjacent phosphocholine (POC) binding site, firm binding to the membrane (mainly driven by hydrophobic interactions) accompanied by the transfer of the N-terminal region to the lipid-water interface and finally pore formation after oligomerization of monomers. The protein is DELTA-actitoxin-Ucs1a of Urticina crassicornis (Mottled anemone).